Consider the following 173-residue polypeptide: Ribonuclease H (173 aa).

Residues 1-20 (MKATSKAKTHPPGATAAKDP) are disordered. An RNase H type-1 domain is found at 20–162 (PQKQVIIYTD…CDVLSKEAAG (143 aa)). Mg(2+) contacts are provided by aspartate 29, glutamate 67, aspartate 89, and aspartate 154.

This sequence belongs to the RNase H family. In terms of assembly, monomer. Mg(2+) is required as a cofactor.

It localises to the cytoplasm. The enzyme catalyses Endonucleolytic cleavage to 5'-phosphomonoester.. Its function is as follows. Endonuclease that specifically degrades the RNA of RNA-DNA hybrids. The sequence is that of Ribonuclease H from Syntrophus aciditrophicus (strain SB).